We begin with the raw amino-acid sequence, 446 residues long: UDP-N-acetylmuramate--L-alanine ligase (446 aa).

122-128 (GTHGKTT) is an ATP binding site.

The protein belongs to the MurCDEF family.

It localises to the cytoplasm. The catalysed reaction is UDP-N-acetyl-alpha-D-muramate + L-alanine + ATP = UDP-N-acetyl-alpha-D-muramoyl-L-alanine + ADP + phosphate + H(+). The protein operates within cell wall biogenesis; peptidoglycan biosynthesis. In terms of biological role, cell wall formation. The sequence is that of UDP-N-acetylmuramate--L-alanine ligase from Nocardioides sp. (strain ATCC BAA-499 / JS614).